We begin with the raw amino-acid sequence, 269 residues long: 5'-nucleotidase SurE (269 aa).

Positions 11, 12, 43, and 101 each coordinate a divalent metal cation.

The protein belongs to the SurE nucleotidase family. Requires a divalent metal cation as cofactor.

It localises to the cytoplasm. It catalyses the reaction a ribonucleoside 5'-phosphate + H2O = a ribonucleoside + phosphate. In terms of biological role, nucleotidase that shows phosphatase activity on nucleoside 5'-monophosphates. The protein is 5'-nucleotidase SurE of Synechococcus sp. (strain CC9605).